We begin with the raw amino-acid sequence, 284 residues long: Phosphatidylserine decarboxylase proenzyme (284 aa).

Residues D88, H145, and S251 each act as charge relay system; for autoendoproteolytic cleavage activity in the active site. The Schiff-base intermediate with substrate; via pyruvic acid; for decarboxylase activity role is filled by S251. Residue S251 is modified to Pyruvic acid (Ser); by autocatalysis.

Belongs to the phosphatidylserine decarboxylase family. PSD-B subfamily. Prokaryotic type I sub-subfamily. As to quaternary structure, heterodimer of a large membrane-associated beta subunit and a small pyruvoyl-containing alpha subunit. The cofactor is pyruvate. Post-translationally, is synthesized initially as an inactive proenzyme. Formation of the active enzyme involves a self-maturation process in which the active site pyruvoyl group is generated from an internal serine residue via an autocatalytic post-translational modification. Two non-identical subunits are generated from the proenzyme in this reaction, and the pyruvate is formed at the N-terminus of the alpha chain, which is derived from the carboxyl end of the proenzyme. The autoendoproteolytic cleavage occurs by a canonical serine protease mechanism, in which the side chain hydroxyl group of the serine supplies its oxygen atom to form the C-terminus of the beta chain, while the remainder of the serine residue undergoes an oxidative deamination to produce ammonia and the pyruvoyl prosthetic group on the alpha chain. During this reaction, the Ser that is part of the protease active site of the proenzyme becomes the pyruvoyl prosthetic group, which constitutes an essential element of the active site of the mature decarboxylase.

The protein localises to the cell membrane. The catalysed reaction is a 1,2-diacyl-sn-glycero-3-phospho-L-serine + H(+) = a 1,2-diacyl-sn-glycero-3-phosphoethanolamine + CO2. The protein operates within phospholipid metabolism; phosphatidylethanolamine biosynthesis; phosphatidylethanolamine from CDP-diacylglycerol: step 2/2. Its function is as follows. Catalyzes the formation of phosphatidylethanolamine (PtdEtn) from phosphatidylserine (PtdSer). The chain is Phosphatidylserine decarboxylase proenzyme from Polaromonas sp. (strain JS666 / ATCC BAA-500).